The primary structure comprises 324 residues: Ribose 1,5-bisphosphate isomerase (324 aa).

Substrate-binding positions include 22–25 (RGAG) and R65. Catalysis depends on C135, which acts as the Proton acceptor. Residue 137-139 (SKA) participates in substrate binding. D204 serves as the catalytic Proton donor. Position 240 (K240) interacts with substrate.

It belongs to the eIF-2B alpha/beta/delta subunits family. R15P isomerase subfamily.

It carries out the reaction alpha-D-ribose 1,5-bisphosphate = D-ribulose 1,5-bisphosphate. Catalyzes the isomerization of ribose 1,5-bisphosphate (R15P) to ribulose 1,5-bisphosphate (RuBP), the CO(2) acceptor and substrate for RubisCO. Functions in an archaeal AMP degradation pathway, together with AMP phosphorylase and RubisCO. The polypeptide is Ribose 1,5-bisphosphate isomerase (Pyrococcus furiosus (strain ATCC 43587 / DSM 3638 / JCM 8422 / Vc1)).